The primary structure comprises 209 residues: ATP phosphoribosyltransferase (209 aa).

Belongs to the ATP phosphoribosyltransferase family. Short subfamily. As to quaternary structure, heteromultimer composed of HisG and HisZ subunits.

It localises to the cytoplasm. The enzyme catalyses 1-(5-phospho-beta-D-ribosyl)-ATP + diphosphate = 5-phospho-alpha-D-ribose 1-diphosphate + ATP. It functions in the pathway amino-acid biosynthesis; L-histidine biosynthesis; L-histidine from 5-phospho-alpha-D-ribose 1-diphosphate: step 1/9. Functionally, catalyzes the condensation of ATP and 5-phosphoribose 1-diphosphate to form N'-(5'-phosphoribosyl)-ATP (PR-ATP). Has a crucial role in the pathway because the rate of histidine biosynthesis seems to be controlled primarily by regulation of HisG enzymatic activity. The chain is ATP phosphoribosyltransferase from Sulfurimonas denitrificans (strain ATCC 33889 / DSM 1251) (Thiomicrospira denitrificans (strain ATCC 33889 / DSM 1251)).